Reading from the N-terminus, the 252-residue chain is Enolase-phosphatase E1 (252 aa).

Mg(2+) contacts are provided by Asp-14 and Glu-16. Residues 143-144 and Lys-177 each bind substrate; that span reads SS. Asp-202 is a Mg(2+) binding site.

Belongs to the HAD-like hydrolase superfamily. MasA/MtnC family. As to quaternary structure, monomer. Mg(2+) serves as cofactor.

Its subcellular location is the cytoplasm. The protein localises to the nucleus. It catalyses the reaction 5-methylsulfanyl-2,3-dioxopentyl phosphate + H2O = 1,2-dihydroxy-5-(methylsulfanyl)pent-1-en-3-one + phosphate. The protein operates within amino-acid biosynthesis; L-methionine biosynthesis via salvage pathway; L-methionine from S-methyl-5-thio-alpha-D-ribose 1-phosphate: step 3/6. Its pathway is amino-acid biosynthesis; L-methionine biosynthesis via salvage pathway; L-methionine from S-methyl-5-thio-alpha-D-ribose 1-phosphate: step 4/6. Its function is as follows. Bifunctional enzyme that catalyzes the enolization of 2,3-diketo-5-methylthiopentyl-1-phosphate (DK-MTP-1-P) into the intermediate 2-hydroxy-3-keto-5-methylthiopentenyl-1-phosphate (HK-MTPenyl-1-P), which is then dephosphorylated to form the acireductone 1,2-dihydroxy-3-keto-5-methylthiopentene (DHK-MTPene). This Drosophila persimilis (Fruit fly) protein is Enolase-phosphatase E1.